Here is a 152-residue protein sequence, read N- to C-terminus: 3-dehydroquinate dehydratase (152 aa).

Residue Tyr-26 is the Proton acceptor of the active site. Substrate-binding residues include Asn-78, His-84, and Asp-91. His-104 functions as the Proton donor in the catalytic mechanism. Residues 105 to 106 (LS) and Arg-115 contribute to the substrate site.

The protein belongs to the type-II 3-dehydroquinase family. Homododecamer.

The catalysed reaction is 3-dehydroquinate = 3-dehydroshikimate + H2O. Its pathway is metabolic intermediate biosynthesis; chorismate biosynthesis; chorismate from D-erythrose 4-phosphate and phosphoenolpyruvate: step 3/7. Functionally, catalyzes a trans-dehydration via an enolate intermediate. The polypeptide is 3-dehydroquinate dehydratase (Idiomarina loihiensis (strain ATCC BAA-735 / DSM 15497 / L2-TR)).